A 118-amino-acid chain; its full sequence is Large ribosomal subunit protein uL18 (118 aa).

The protein belongs to the universal ribosomal protein uL18 family. Part of the 50S ribosomal subunit; part of the 5S rRNA/L5/L18/L25 subcomplex. Contacts the 5S and 23S rRNAs.

Functionally, this is one of the proteins that bind and probably mediate the attachment of the 5S RNA into the large ribosomal subunit, where it forms part of the central protuberance. This chain is Large ribosomal subunit protein uL18, found in Helicobacter hepaticus (strain ATCC 51449 / 3B1).